Consider the following 425-residue polypeptide: Polyribonucleotide 5'-hydroxyl-kinase Clp1 (425 aa).

ATP is bound by residues Glu22, Lys62, and 124 to 129 (DVGKST).

The protein belongs to the Clp1 family. Clp1 subfamily. As to quaternary structure, component of the tRNA splicing endonuclease complex, composed of CLP1, TSEN2, TSEN15, TSEN34 and TSEN54. Component of pre-mRNA cleavage complex II (CF-II). Also associates with numerous components of the pre-mRNA cleavage complex I (CF-I/CFIm), including NUDT21, CPSF2, CPSF3, CPSF6 and CPSF7. Interacts with CSTF2 and SYMPK. The cofactor is Mg(2+). It depends on Mn(2+) as a cofactor. Ni(2+) is required as a cofactor.

Its subcellular location is the nucleus. The catalysed reaction is a 5'-end dephospho-2'-deoxyribonucleoside-DNA + ATP = a 5'-end 5'-phospho-2'-deoxyribonucleoside-DNA + ADP + H(+). It catalyses the reaction a 5'-end dephospho-ribonucleoside-RNA + ATP = a 5'-end 5'-phospho-ribonucleoside-RNA + ADP + H(+). Polynucleotide kinase that can phosphorylate the 5'-hydroxyl groups of double-stranded RNA (dsRNA), single-stranded RNA (ssRNA), double-stranded DNA (dsDNA) and double-stranded DNA:RNA hybrids. dsRNA is phosphorylated more efficiently than dsDNA, and the RNA component of a DNA:RNA hybrid is phosphorylated more efficiently than the DNA component. Plays a key role in both tRNA splicing and mRNA 3'-end formation. Component of the tRNA splicing endonuclease complex: phosphorylates the 5'-terminus of the tRNA 3'-exon during tRNA splicing; this phosphorylation event is a prerequisite for the subsequent ligation of the two exon halves and the production of a mature tRNA. Its role in tRNA splicing and maturation is required for cerebellar development. Component of the pre-mRNA cleavage complex II (CF-II), which seems to be required for mRNA 3'-end formation. Also phosphorylates the 5'-terminus of exogenously introduced short interfering RNAs (siRNAs), which is a necessary prerequisite for their incorporation into the RNA-induced silencing complex (RISC). However, endogenous siRNAs and microRNAs (miRNAs) that are produced by the cleavage of dsRNA precursors by DICER1 already contain a 5'-phosphate group, so this protein may be dispensible for normal RNA-mediated gene silencing. This Bos taurus (Bovine) protein is Polyribonucleotide 5'-hydroxyl-kinase Clp1.